The sequence spans 340 residues: MKQKVAVLGPGSWGTALAQVLAENGHEVCIWGNKPEQIDEINTKHTNKHYLPELILPTSIQATTDLATALVDVDAVLFVVPTKAIRSVAQEVAQHLKTKPIIIHASKGLEQGTHKRISEVIAEEIPAEKRQGIVVLSGPSHAEEVAVHDITTITAASENLADAVYVQELFMNDYFRIYTNDDVIGVETGAALKNIIALGAGAIHGLGFGDNAKAAIMTRGLAEISRLGVAMGANPLTFIGLSGVGDLIVTCTSVHSRNWRAGNLLGKGHKLDEVLENMGMIVEGVSTTKAAYELAQQLEVEMPITETIYNVLYNDEDVQQAAKEIMLRDGKTENEFTLDF.

The NADPH site is built by S12, W13, K34, and K107. Residues K107, G138, and S140 each coordinate sn-glycerol 3-phosphate. A142 is an NADPH binding site. Residues K193, D246, S256, R257, and N258 each coordinate sn-glycerol 3-phosphate. K193 functions as the Proton acceptor in the catalytic mechanism. R257 contributes to the NADPH binding site. Positions 281 and 283 each coordinate NADPH.

Belongs to the NAD-dependent glycerol-3-phosphate dehydrogenase family.

It localises to the cytoplasm. The catalysed reaction is sn-glycerol 3-phosphate + NAD(+) = dihydroxyacetone phosphate + NADH + H(+). The enzyme catalyses sn-glycerol 3-phosphate + NADP(+) = dihydroxyacetone phosphate + NADPH + H(+). The protein operates within membrane lipid metabolism; glycerophospholipid metabolism. Catalyzes the reduction of the glycolytic intermediate dihydroxyacetone phosphate (DHAP) to sn-glycerol 3-phosphate (G3P), the key precursor for phospholipid synthesis. This chain is Glycerol-3-phosphate dehydrogenase [NAD(P)+], found in Enterococcus faecalis (strain ATCC 700802 / V583).